A 299-amino-acid polypeptide reads, in one-letter code: Trimeric intracellular cation channel type A (299 aa).

The Lumenal segment spans residues 1-18 (MELLSALSLGELALSFSR). Residues 19-39 (VPLFPVFDLSYFIVSILYLKY) form a helical membrane-spanning segment. The Cytoplasmic segment spans residues 40-51 (EPGAVELSRRHP). A helical membrane pass occupies residues 52-72 (IASWLCAMLHCFGSYILADLL). The Lumenal segment spans residues 73-85 (LGEPLIDYFSNNS). Ca(2+) is bound at residue Gly74. Residues 86–106 (SILLASAVWYLIFFCPLDLFY) traverse the membrane as a helical segment. Topologically, residues 107–144 (KCVCFLPVKLIFVAMKEVVRVRKIAVGIHHAHHHYHHG) are cytoplasmic. A 1,2-diacyl-sn-glycero-3-phospho-(1D-myo-inositol-4,5-bisphosphate) contacts are provided by Lys122 and Arg126. The helical transmembrane segment at 145–165 (WFVMIATGWVKGSGVALMSNF) threads the bilayer. Residues 166 to 178 (EQLLRGVWKPETN) lie on the Lumenal side of the membrane. A helical transmembrane segment spans residues 179 to 199 (EILHMSFPTKASLYGAILFTL). The Cytoplasmic portion of the chain corresponds to 200-209 (QQTRWLPVSK). Residues 210 to 230 (ASLIFIFTLFMVSCKVFLTAT) form a helical membrane-spanning segment. The Lumenal portion of the chain corresponds to 231–234 (HSHS). Residues 235-255 (SPFDALEGYICPVLFGSACGG) traverse the membrane as a helical segment. Topologically, residues 256 to 299 (DHHHDNHGGSHSGGGPGAQHSAMPAKSKEELSEGSRKKKAKKAD) are cytoplasmic. The interval 260–299 (DNHGGSHSGGGPGAQHSAMPAKSKEELSEGSRKKKAKKAD) is disordered. The span at 281–290 (KSKEELSEGS) shows a compositional bias: basic and acidic residues.

Belongs to the TMEM38 family. As to quaternary structure, homotrimer; conformation seems to be controled by binding to diacylglycerol (DAG).

Its subcellular location is the sarcoplasmic reticulum membrane. It localises to the nucleus membrane. The catalysed reaction is K(+)(in) = K(+)(out). With respect to regulation, channel activity is activated by a change of voltage within the sarcoplasmic reticulum lumen and blocked by luminal high Ca(2+) levels. Intracellular monovalent cation channel required for maintenance of rapid intracellular calcium release. Acts as a potassium counter-ion channel that functions in synchronization with calcium release from intracellular stores. Opened by a change of voltage within the sarcoplasmic reticulum lumen. This chain is Trimeric intracellular cation channel type A, found in Homo sapiens (Human).